The sequence spans 305 residues: Delta-9 acyl-lipid desaturase 1 (305 aa).

Residues 1 to 20 (MSLSASEKEENNKKMAADKA) form a disordered region. 2 helical membrane-spanning segments follow: residues 39-59 (IVKAFASLFVHFLCLLAPFNF) and 60-80 (TWPALRVALIVYTVGGLGITV). Fe cation-binding residues include H83, H88, H120, H123, and H124. The short motif at 83 to 88 (HRNLAH) is the Histidine box-1 element. The Histidine box-2 motif lies at 120–124 (HRYHH). A helical membrane pass occupies residues 180-200 (VLYHILTFGFLLYYFGGLSFL). 4 residues coordinate Fe cation: H223, H252, H255, and H256. Positions 252–256 (HNNHH) match the Histidine box-3 motif. A helical membrane pass occupies residues 268–288 (WWQIDISWYIVRFLEIIGLAT).

Belongs to the fatty acid desaturase type 1 family. Requires Fe cation as cofactor. As to expression, strongly expressed in inflorescence meristems, leaves, and flowers, and weakly in roots and seedpods.

Its subcellular location is the endoplasmic reticulum membrane. The protein resides in the plastid. It is found in the chloroplast membrane. It participates in lipid metabolism; polyunsaturated fatty acid biosynthesis. Functionally, involved in delta-9 desaturation of fatty acids. Involved in the production of very-long-chain fatty acids (VLCFAs). May desaturate chloroplastic monogalactosyl diacylglycerol (MGDG) and alter chloroplast membrane fluidity, which is required to prime a cold acclimation response. In Arabidopsis thaliana (Mouse-ear cress), this protein is Delta-9 acyl-lipid desaturase 1.